Here is a 25-residue protein sequence, read N- to C-terminus: Large ribosomal subunit protein uL30 (25 aa).

This sequence belongs to the universal ribosomal protein uL30 family. Part of the 50S ribosomal subunit.

This Pseudomonas putida (Arthrobacter siderocapsulatus) protein is Large ribosomal subunit protein uL30 (rpmD).